The chain runs to 497 residues: Low affinity K(+) transporter 1 (497 aa).

The Extracellular segment spans residues Met1 to Lys29. Residues Thr30–Val50 traverse the membrane as a helical segment. Topologically, residues Ser51–Lys80 are cytoplasmic. Residues Trp81 to Gly101 traverse the membrane as a helical segment. Over Met102–Ser216 the chain is Extracellular. A helical transmembrane segment spans residues Leu217–Ile237. Over Cys238–Thr497 the chain is Cytoplasmic. Phosphoserine is present on residues Ser291 and Ser319. A disordered region spans residues Glu420 to Tyr469. A compositionally biased stretch (low complexity) spans Pro429–Arg444. Polar residues predominate over residues Gln451–Asn465.

It belongs to the KCH1 low affinity K(+) transporter family.

The protein resides in the vacuole membrane. The protein localises to the cell membrane. The enzyme catalyses K(+)(in) = K(+)(out). Functionally, low affinity potassium transporter that, with PRM6/KCH2, participates in high-affinity Ca(2+) influx system (HACS) activation during the response to mating pheromone. Directly promotes K(+) influx and HACS may electrochemically respond to this K(+) influx. KCH1 and KCH2 act at the apex of the calcium signaling pathway that is used for survival during prolonged exposures to mating pheromones. This Saccharomyces cerevisiae (strain ATCC 204508 / S288c) (Baker's yeast) protein is Low affinity K(+) transporter 1.